Consider the following 284-residue polypeptide: MPFSRLFGKKDKNQMDDIVEEGVQRVLELPMDKIFPNQFQPRTVFDQDKIDELARTIRIHGVIQPIVVREMEPDYYEIIAGERRFRAVLSLKLEKIPAIIQNLDDEEVAAIALIENLQREELTPIEEAKAYRSLLDMQDVTQEALAQRVGKSQSAIANKMRLLKLPETVQEAVLNKQISERHARSLLALETEEQQVSLLQEIEENHWNVKQTEARIQEILGVKKSVATKKTKPKRQAISRDVRIAMNTIKQSVTMVKDNGMDLDFTEEETDDFYQITIQIPKKK.

The segment at residues 143 to 162 is a DNA-binding region (H-T-H motif); that stretch reads EALAQRVGKSQSAIANKMRL.

It belongs to the ParB family.

The protein resides in the cytoplasm. The protein localises to the nucleoid. Its function is as follows. Effects nucleoid occlusion by binding relatively nonspecifically to DNA and preventing the assembly of the division machinery in the vicinity of the nucleoid, especially under conditions that disturb the cell cycle. It helps to coordinate cell division and chromosome segregation by preventing the formation of the Z ring through the nucleoid, which would cause chromosome breakage. This Listeria innocua serovar 6a (strain ATCC BAA-680 / CLIP 11262) protein is Nucleoid occlusion protein.